The sequence spans 348 residues: Zinc transporter ZIP13 (348 aa).

Residues 1–45 (MMIQTAVAQAKTAPAGPGPWSIKDLVDLQYLDELMSIDNLDVWFC) lie on the Cytoplasmic side of the membrane. A helical membrane pass occupies residues 46 to 66 (SLVGSIAIGLSGIFPLLVIPI). Residues 67-83 (EAGTALKTEAGCQKLKK) lie on the Lumenal side of the membrane. Residues 84 to 104 (LLSFAIGGLLGDVFLHLLPEA) form a helical membrane-spanning segment. The Cytoplasmic portion of the chain corresponds to 105–118 (WAYTSSPGGSHRHY). Residues 119-139 (CTQGLWVIGGLMSFLTLEKMF) traverse the membrane as a helical segment. Topologically, residues 140-219 (PDEVGDPETK…CIDNFTHGLA (80 aa)) are lumenal. The interval 144-192 (GDPETKTSFQRTTSSSSDLSSQFSVSPQTNGICSNNNSDSKPKTDISPY) is disordered. Residues 149–169 (KTSFQRTTSSSSDLSSQFSVS) show a composition bias toward low complexity. Residues 170-182 (PQTNGICSNNNSD) are compositionally biased toward polar residues. The helical transmembrane segment at 220–240 (VAGSFLVSRKVGFLTTFAILL) threads the bilayer. Residues 241 to 246 (HEIPHE) carry the XEXPHE-motif motif. Residues 241-262 (HEIPHEVGDFAILLRAGFDRWK) lie on the Cytoplasmic side of the membrane. A helical membrane pass occupies residues 263–283 (AARMQLSTALGGVLGACFALC). Topologically, residues 284-294 (SQSQHGAENAT) are lumenal. The chain crosses the membrane as a helical span at residues 295–315 (TWILPFTSGGFLYIALVNVVP). The Cytoplasmic portion of the chain corresponds to 316-326 (DLLEETNPRNS). The helical transmembrane segment at 327-347 (LLQVLLLFSGIGVMALLSIAM) threads the bilayer. Position 348 (aspartate 348) is a topological domain, lumenal.

It belongs to the ZIP transporter (TC 2.A.5) family. As to quaternary structure, homodimer.

The protein localises to the golgi apparatus membrane. Its subcellular location is the cytoplasmic vesicle membrane. It is found in the endoplasmic reticulum membrane. It catalyses the reaction Zn(2+)(in) = Zn(2+)(out). Functions as a zinc transporter transporting Zn(2+) from the Golgi apparatus to the cytosol and thus influences the zinc level at least in areas of the cytosol. The chain is Zinc transporter ZIP13 from Danio rerio (Zebrafish).